A 194-amino-acid chain; its full sequence is Small ribosomal subunit protein uS5 (194 aa).

The S5 DRBM domain maps to 26 to 89; it reads LEEKVVEIRR…ADAKKRIIKV (64 aa).

This sequence belongs to the universal ribosomal protein uS5 family. Part of the 30S ribosomal subunit. Contacts proteins S4 and S8.

Its function is as follows. With S4 and S12 plays an important role in translational accuracy. In terms of biological role, located at the back of the 30S subunit body where it stabilizes the conformation of the head with respect to the body. The sequence is that of Small ribosomal subunit protein uS5 from Sulfurihydrogenibium sp. (strain YO3AOP1).